We begin with the raw amino-acid sequence, 732 residues long: Ets DNA-binding protein pokkuri (732 aa).

The 85-residue stretch at 33 to 117 folds into the PNT domain; the sequence is SSQLAELKTQ…NVLQMLIIES (85 aa). The interval 133–295 is disordered; it reads SRYPLSPHSH…PPGTPILKDI (163 aa). Pro residues predominate over residues 141–157; that stretch reads SHPPTPTWPPLNAPPEN. Polar residues predominate over residues 176–193; the sequence is NSVTLSPPPSVDSQASSP. Residues 205–240 are compositionally biased toward low complexity; that stretch reads GAAPGSAGGSAPAAGGATNTSNPTSSSASSTGSNGS. Positions 396 to 479 form a DNA-binding region, ETS; it reads RLLWDFLQQL…QGERHCYQFL (84 aa). 3 disordered regions span residues 496–548, 590–647, and 674–732; these read QSTP…NGPM, GPPP…TATS, and VAAS…HMQQ. The span at 506–539 shows a compositional bias: low complexity; the sequence is SPSMPQGSSQAPGSPAGQNWNPQQQSQQQQQSPQ. Ser543 carries the phosphoserine modification. Positions 637–647 are enriched in polar residues; the sequence is LSVSSKSTATS. Residues Ser677, Ser682, and Ser696 each carry the phosphoserine modification. Positions 690–709 are enriched in polar residues; sequence AGASNASSSPRPMDQASEQA.

This sequence belongs to the ETS family. Post-translationally, phosphorylated in response to MAPK signaling. May be phosphorylated by rl. As to expression, expressed in R7 and cone cells of the eye.

It localises to the nucleus. Its function is as follows. Ets-related protein that functions as a negative regulator of photoreceptor development acting antagonistically to pnt and the proneural signal mediated by RAS. It acts upstream of SINA to inhibit R7 development. This chain is Ets DNA-binding protein pokkuri (aop), found in Drosophila melanogaster (Fruit fly).